The sequence spans 500 residues: Centrosomal protein of 57 kDa (500 aa).

A compositionally biased stretch (low complexity) spans 1–17 (MAAASVSAASGSHLSNS). Disordered stretches follow at residues 1–34 (MAAASVSAASGSHLSNSFAEPSRSNGSMVRHSSS) and 43–62 (KPFLNSDLRRSPSKPTLAYP). Polar residues predominate over residues 18 to 34 (FAEPSRSNGSMVRHSSS). S53 and S55 each carry phosphoserine. Residues 58 to 239 (TLAYPESNSR…KAAELQTGLE (182 aa)) are centrosome localization domain (CLD). 2 coiled-coil regions span residues 63–242 (ESNS…ETNR) and 392–492 (ELKD…NSLQ). The mediates interaction with microtubules stretch occupies residues 277 to 491 (GAQPHYRLCL…KDMQSIQNSL (215 aa)). Residues 434 to 450 (KKELKATKKTLDEERNS) are compositionally biased toward basic and acidic residues. The tract at residues 434-472 (KKELKATKKTLDEERNSSSRSGITGTTNKKDFMKLRPGE) is disordered. The span at 451-460 (SSRSGITGTT) shows a compositional bias: polar residues. Residues 461–471 (NKKDFMKLRPG) show a composition bias toward basic and acidic residues.

This sequence belongs to the translokin family. As to quaternary structure, homodimer and homooligomer. Interacts with microtubules. Interacts with FGF2 and RAP80. Does not interact with FGF1 or FGF2 isoform 24 kDa. As to expression, ubiquitous.

The protein localises to the nucleus. Its subcellular location is the cytoplasm. The protein resides in the cytoskeleton. It localises to the microtubule organizing center. It is found in the centrosome. Functionally, centrosomal protein which may be required for microtubule attachment to centrosomes. May act by forming ring-like structures around microtubules. Mediates nuclear translocation and mitogenic activity of the internalized growth factor FGF2, but that of FGF1. In Homo sapiens (Human), this protein is Centrosomal protein of 57 kDa (CEP57).